Consider the following 637-residue polypeptide: Coiled-coil domain-containing protein 22 homolog (637 aa).

Coiled coils occupy residues 322-489 (ETEI…YKQA) and 608-637 (SDRV…ETKN).

The protein belongs to the CCDC22 family.

The polypeptide is Coiled-coil domain-containing protein 22 homolog (Dictyostelium discoideum (Social amoeba)).